Consider the following 164-residue polypeptide: Endoribonuclease YbeY (164 aa).

Zn(2+) contacts are provided by His117, His121, and His127.

The protein belongs to the endoribonuclease YbeY family. It depends on Zn(2+) as a cofactor.

It is found in the cytoplasm. Its function is as follows. Single strand-specific metallo-endoribonuclease involved in late-stage 70S ribosome quality control and in maturation of the 3' terminus of the 16S rRNA. The sequence is that of Endoribonuclease YbeY from Mycoplasma capricolum subsp. capricolum (strain California kid / ATCC 27343 / NCTC 10154).